A 508-amino-acid chain; its full sequence is CXXC-type zinc finger protein 1 (508 aa).

The CXXC-type zinc-finger motif lies at 10–47 (EDVWKERCMNCIRCNDEKNCGTCWPCRNGKTCDMRKCF). Disordered stretches follow at residues 95–156 (QQVE…EPDK) and 453–508 (KSQS…TQNN). Composition is skewed to low complexity over residues 113-123 (AAAAAQQRKAN) and 454-481 (SQST…SSSS).

As to quaternary structure, component of the SET2 complex (also known as the SET1/COMPASS complex), which contains at least set-2, swd-2.1, cfp-1, rbbp-5, wdr-5.1, dpy-30 and ash-2. Within the complex, interacts with wdr-5.1, ash-2 and dpy-30. Also interacts with the SIN3S complex, which contains at least sin-3, hda-1, athp-1 and mrg-1. Interacts with sin-3, hda-1 and mrg-1.

The protein resides in the nucleus. In terms of biological role, transcriptional activator that exhibits a unique DNA binding specificity for CpG motifs; enriched at promoters containing the trimethylation mark on histone H3 'Lys-4' (H3K4me3). Forms part of the SET2 complex and interacts with the SIN3S HDAC complex at promoters. Required for H3K4 trimethylation and plays a repressive role in the expression of heat shock and salt-inducible genes. Required for fertility, in cooperation with class I histone deacetylases (HDACs). In Caenorhabditis elegans, this protein is CXXC-type zinc finger protein 1.